Reading from the N-terminus, the 375-residue chain is uncharacterized protein (375 aa).

Residues 78-302 (KKIEITSTIH…IFPNIRITSP (225 aa)) form the Radical SAM core domain. Residues C92, C98, and C101 each contribute to the [4Fe-4S] cluster site.

It depends on [4Fe-4S] cluster as a cofactor.

This is an uncharacterized protein from Methanocaldococcus jannaschii (strain ATCC 43067 / DSM 2661 / JAL-1 / JCM 10045 / NBRC 100440) (Methanococcus jannaschii).